Reading from the N-terminus, the 674-residue chain is MTSVQNTESETAAGATTIGVLFAGSDPETGPAACDLDEDGRFDVTQIRDFVAARDRVDDPDIDCVVAVHEPDGFDGVAFLEAVRQTHAEFPVVVVPTAVDEDVARRAVDADATGLVPAVSEDATAAIADRIEQSAPAHSEDTETRMPISDLTVESERRLKEQALDEAPIGITISDATDPEEPIIYINDSFEDITGYSPDEVVGANHRFLQGPKTNEDRVAEFWTAITEDHDTQVVLRNYRRDGSLFWNQVDISPIYDEDGTVSHYVGFQMDVSERMAAQQELQGERQSLDRLLDRVNGLMNDVTSALVRAADREEIETRITDRIGTGGEYAGAWFGRYDATEDTITVAEAAGDCEGCDGDVFDLASAGEAVALLQDVVEQREALVSTDADGVSGTADGDACVLVPVTYRSTTYGVLAVSTAEHRIDDREQVLLRSLGRTTGASINDALTRRTIATDTVLNIGVELSDTALFLVELAGATDTTFEQEATIADSQTQGVLMLVTTPHDDPQAVVDTALGYDAVQDAEVIVSTDDESVVQFDLSSSPLVDVLSECGSRVIRMHADRTTLELDVRVGTEGAARRVLSTLRDKYADVELVAYHEDDPEQTPHGFREELRNDLTDRQLTALQKAYVSGYFEWPRRAEGKQLAESMDIVPSTYHQHLQAAKQKLVGAFFEE.

The 113-residue stretch at 19–131 folds into the Response regulatory domain; sequence GVLFAGSDPE…DATAAIADRI (113 aa). Residues 156 to 229 form the PAS domain; that stretch reads ERRLKEQALD…AEFWTAITED (74 aa). The PAC domain maps to 230 to 284; it reads HDTQVVLRNYRRDGSLFWNQVDISPIYDEDGTVSHYVGFQMDVSERMAAQQELQG. In terms of domain architecture, GAF spans 285–454; sequence ERQSLDRLLD…NDALTRRTIA (170 aa). Residues 617-668 enclose the HTH bat-type domain; the sequence is LTDRQLTALQKAYVSGYFEWPRRAEGKQLAESMDIVPSTYHQHLQAAKQKLV.

In terms of biological role, involved in activating bop (bacterioopsin) and brp gene expression at low-oxygen tension, which naturally occurs in stationary phase. The polypeptide is Bacterioopsin transcriptional activator (bat) (Halobacterium salinarum (strain ATCC 700922 / JCM 11081 / NRC-1) (Halobacterium halobium)).